Here is a 317-residue protein sequence, read N- to C-terminus: Tyrosine--tRNA ligase (317 aa).

Tyrosine 33 is an L-tyrosine binding site. Positions proline 38–histidine 46 match the 'HIGH' region motif. Residues tyrosine 155, glutamine 159, aspartate 162, and glutamine 177 each coordinate L-tyrosine. The short motif at lysine 211 to serine 215 is the 'KMSKS' region element. Serine 214 serves as a coordination point for ATP.

It belongs to the class-I aminoacyl-tRNA synthetase family. TyrS type 3 subfamily. Homodimer.

The protein resides in the cytoplasm. The catalysed reaction is tRNA(Tyr) + L-tyrosine + ATP = L-tyrosyl-tRNA(Tyr) + AMP + diphosphate + H(+). Catalyzes the attachment of tyrosine to tRNA(Tyr) in a two-step reaction: tyrosine is first activated by ATP to form Tyr-AMP and then transferred to the acceptor end of tRNA(Tyr). This chain is Tyrosine--tRNA ligase, found in Methanosarcina barkeri (strain Fusaro / DSM 804).